Reading from the N-terminus, the 92-residue chain is Acylphosphatase (92 aa).

Positions 5-92 (CIAAYVYGVV…TPFETFKIRY (88 aa)) constitute an Acylphosphatase-like domain. Catalysis depends on residues arginine 20 and asparagine 38.

The protein belongs to the acylphosphatase family.

The catalysed reaction is an acyl phosphate + H2O = a carboxylate + phosphate + H(+). This is Acylphosphatase (acyP) from Yersinia enterocolitica serotype O:8 / biotype 1B (strain NCTC 13174 / 8081).